The sequence spans 933 residues: Bromodomain testis-specific protein (933 aa).

Residues 1–21 (MSMSSRHLHSSIVNPPPPEYI) are disordered. The 107-residue stretch at 28–134 (RLTNQLQYLE…KVFMEKIAEM (107 aa)) folds into the Bromo 1 domain. The short motif at 214-225 (KGIKRKADTTTP) is the Nuclear localization signal element. Residues 235–263 (ESSPTLSEPKPNKILSGTEKTRSAETSAV) form a disordered region. The 108-residue stretch at 278 to 385 (NQICEQLKHC…DVFEGMFAKI (108 aa)) folds into the Bromo 2 domain. Disordered stretches follow at residues 398–425 (RYKTSTEESSSSSSSEQSSSSDSEDERA), 576–610 (KPSSIKSLKSKEQLNKEKKQELEKRLRDVSGQLSS), and 627–662 (GGPSRLSESSTSSSASDVSNSSDSSSSDSSDSESAT). The span at 404–418 (EESSSSSSSEQSSSS) shows a compositional bias: low complexity. A coiled-coil region spans residues 423–448 (ERAQHLALLQEQLRAVQEQLKALTET). One can recognise an NET domain in the interval 495 to 577 (VSDEEEDVKP…VCLRKRPKKP (83 aa)). Residues 584 to 603 (KSKEQLNKEKKQELEKRLRD) are compositionally biased toward basic and acidic residues. The segment covering 630 to 660 (SRLSESSTSSSASDVSNSSDSSSSDSSDSES) has biased composition (low complexity). Positions 829-917 (AKEERERALK…RREAMAGTID (89 aa)) form a coiled coil.

Belongs to the BET family.

It is found in the nucleus. Its function is as follows. Testis-specific chromatin protein that specifically binds histone H4 acetylated at 'Lys-5' and 'Lys-8' (H4K5ac and H4K8ac, respectively) and plays a key role in spermatogenesis. Required in late pachytene spermatocytes: plays a role in meiotic and post-meiotic cells by binding to acetylated histones at the promoter of specific meiotic and post-meiotic genes, facilitating their activation at the appropriate time. In the post-meiotic phase of spermatogenesis, binds to hyperacetylated histones and participates in their general removal from DNA. Also recognizes and binds a subset of butyrylated histones: able to bind histone H4 butyrylated at 'Lys-8' (H4K8ac), while it is not able to bind H4 butyrylated at 'Lys-5' (H4K5ac). The polypeptide is Bromodomain testis-specific protein (brdt) (Xenopus tropicalis (Western clawed frog)).